Here is a 231-residue protein sequence, read N- to C-terminus: Ribose-5-phosphate isomerase A (231 aa).

Residues 40 to 43 (TGST), 93 to 96 (DGAD), and 106 to 109 (KGGG) each bind substrate. Glu115 acts as the Proton acceptor in catalysis. Lys133 is a substrate binding site.

Belongs to the ribose 5-phosphate isomerase family. As to quaternary structure, homodimer.

The enzyme catalyses aldehydo-D-ribose 5-phosphate = D-ribulose 5-phosphate. It functions in the pathway carbohydrate degradation; pentose phosphate pathway; D-ribose 5-phosphate from D-ribulose 5-phosphate (non-oxidative stage): step 1/1. Its function is as follows. Catalyzes the reversible conversion of ribose-5-phosphate to ribulose 5-phosphate. In Escherichia coli O1:K1 / APEC, this protein is Ribose-5-phosphate isomerase A.